A 140-amino-acid polypeptide reads, in one-letter code: Fluoride-specific ion channel FluC 1 (140 aa).

The next 4 membrane-spanning stretches (helical) occupy residues 3 to 23 (TGAT…GAAA), 38 to 58 (APLW…GLVL), 80 to 100 (ILYP…STVM), and 113 to 133 (IAGV…ALWC). Positions 91 and 94 each coordinate Na(+).

This sequence belongs to the fluoride channel Fluc/FEX (TC 1.A.43) family.

The protein localises to the cell membrane. The catalysed reaction is fluoride(in) = fluoride(out). Na(+) is not transported, but it plays an essential structural role and its presence is essential for fluoride channel function. Fluoride-specific ion channel. Important for reducing fluoride concentration in the cell, thus reducing its toxicity. This Corynebacterium jeikeium (strain K411) protein is Fluoride-specific ion channel FluC 1.